The sequence spans 583 residues: MTTKVAANSAAYEAIVRAGPRVKQLQQVHAHLIVTGYGRSRSLLTKLITLACSARAIAYTHLLFLSVPLPDDFLFNSVIKSTSKLRLPLHCVAYYRRMLSSNVSPSNYTFTSVIKSCADLSALRIGKGVHCHAVVSGFGLDTYVQAALVTFYSKCGDMEGARQVFDRMPEKSIVAWNSLVSGFEQNGLADEAIQVFYQMRESGFEPDSATFVSLLSACAQTGAVSLGSWVHQYIISEGLDLNVKLGTALINLYSRCGDVGKAREVFDKMKETNVAAWTAMISAYGTHGYGQQAVELFNKMEDDCGPIPNNVTFVAVLSACAHAGLVEEGRSVYKRMTKSYRLIPGVEHHVCMVDMLGRAGFLDEAYKFIHQLDATGKATAPALWTAMLGACKMHRNYDLGVEIAKRLIALEPDNPGHHVMLSNIYALSGKTDEVSHIRDGMMRNNLRKQVGYSVIEVENKTYMFSMGDESHQETGEIYRYLETLISRCKEIGYAPVSEEVMHQVEEEEKEFALRYHSEKLAVAFGLLKTVDVAITIVKNLRICEDCHSAFKYISIVSNRQITVRDKLRFHHFQNGSCSCLDYW.

PPR repeat units follow at residues D71–P105, S106–L140, D141–K171, S172–P206, D207–L241, N242–A276, W277–D303, N309–S339, and G345–T379. Positions L383–E458 are type E motif. Positions N459–K489 are type E(+) motif. Residues E490 to W583 are type DYW motif.

This sequence belongs to the PPR family. PCMP-H subfamily.

This Arabidopsis thaliana (Mouse-ear cress) protein is Pentatricopeptide repeat-containing protein At2g33760 (PCMP-H6).